Here is a 1247-residue protein sequence, read N- to C-terminus: Respiratory nitrate reductase 1 alpha chain (1247 aa).

In terms of domain architecture, 4Fe-4S Mo/W bis-MGD-type spans 43–107; the sequence is DKIVRSTHGV…SYSWYLYSAN (65 aa). [4Fe-4S] cluster is bound by residues His50, Cys54, Cys58, and Cys93. Asp223 lines the Mo-bis(molybdopterin guanine dinucleotide) pocket.

This sequence belongs to the prokaryotic molybdopterin-containing oxidoreductase family. In terms of assembly, dimer of heterotrimers each composed of an alpha, a beta and a gamma chain. Alpha and beta are catalytic chains; gamma chains are involved in binding the enzyme complex to the cytoplasmic membrane. Interacts with the NarJ chaperone. Requires [4Fe-4S] cluster as cofactor. Mo-bis(molybdopterin guanine dinucleotide) is required as a cofactor.

The protein resides in the cell membrane. The catalysed reaction is nitrate + a quinol = a quinone + nitrite + H2O. The nitrate reductase enzyme complex allows E.coli to use nitrate as an electron acceptor during anaerobic growth. The alpha chain is the actual site of nitrate reduction. The polypeptide is Respiratory nitrate reductase 1 alpha chain (narG) (Escherichia coli (strain K12)).